Reading from the N-terminus, the 544-residue chain is Chaperonin GroEL (544 aa).

Residues 29 to 32 (TLGP), K50, 86 to 90 (DGTTT), G413, 479 to 481 (DAA), and D495 contribute to the ATP site.

The protein belongs to the chaperonin (HSP60) family. Forms a cylinder of 14 subunits composed of two heptameric rings stacked back-to-back. Interacts with the co-chaperonin GroES.

The protein localises to the cytoplasm. The catalysed reaction is ATP + H2O + a folded polypeptide = ADP + phosphate + an unfolded polypeptide.. Its function is as follows. Together with its co-chaperonin GroES, plays an essential role in assisting protein folding. The GroEL-GroES system forms a nano-cage that allows encapsulation of the non-native substrate proteins and provides a physical environment optimized to promote and accelerate protein folding. This chain is Chaperonin GroEL, found in Borrelia duttonii (strain Ly).